An 812-amino-acid chain; its full sequence is Ras guanine nucleotide exchange factor J (812 aa).

2 stretches are compositionally biased toward low complexity: residues 1-36 and 53-65; these read MSNP…NSKS and LLNR…NLNN. The interval 1–146 is disordered; the sequence is MSNPVSINNS…GGSSGGLNMS (146 aa). Positions 75–86 are enriched in polar residues; sequence SFTSNYQNIYTP. Residues 87–101 are compositionally biased toward low complexity; that stretch reads NNNSYNSSNNNNNNN. The span at 131–141 shows a compositional bias: gly residues; the sequence is NSGGGGGGSSG. One can recognise a LisH domain in the interval 214-246; the sequence is GRDTMLQLILQHLQFEGLMDSRKLLEEEARVQY. A disordered region spans residues 320 to 382; sequence IIYVDDKEKE…NNSIGNSNSY (63 aa). A compositionally biased stretch (basic and acidic residues) spans 323 to 343; that stretch reads VDDKEKEKEKEKEKEKEKDKF. Residues 344-382 show a composition bias toward low complexity; that stretch reads GPNSTNSLSGSGSSPNIPSGMNNNSSSIGNNSIGNSNSY. The N-terminal Ras-GEF domain occupies 409 to 535; that stretch reads NKPQVKAASL…LSESLNAKIK (127 aa). One can recognise a Ras-GEF domain in the interval 573–804; that stretch reads DEEEIARQLT…YSRSMSFEPR (232 aa).

Functionally, promotes the exchange of Ras-bound GDP by GTP. The polypeptide is Ras guanine nucleotide exchange factor J (gefJ) (Dictyostelium discoideum (Social amoeba)).